A 532-amino-acid chain; its full sequence is E3 ubiquitin-protein ligase rnf8-B (532 aa).

An FHA domain is found at 30–84 (VTMGRGLGVTYQLKPTLCPLMISRTHCLFKQNARDEWTVTDNKSLNGVWRNKERL). The interval 127–209 (SLIRPLPGKT…VETDTVSPTQ (83 aa)) is disordered. The span at 169–178 (VSRDGEDSAK) shows a compositional bias: basic and acidic residues. The segment at 377 to 415 (CIICSEHFIEAVTLNCAHSFCSYCIKSWRKRKEECPICR) adopts an RING-type zinc-finger fold.

This sequence belongs to the RNF8 family. As to quaternary structure, homodimer. Forms a E2-E3 ubiquitin ligase complex composed of the rnf8 homodimer and a E2 heterodimer of ube2n and ube2v2.

Its subcellular location is the nucleus. It carries out the reaction S-ubiquitinyl-[E2 ubiquitin-conjugating enzyme]-L-cysteine + [acceptor protein]-L-lysine = [E2 ubiquitin-conjugating enzyme]-L-cysteine + N(6)-ubiquitinyl-[acceptor protein]-L-lysine.. The protein operates within protein modification; protein ubiquitination. E3 ubiquitin-protein ligase that plays a key role in DNA damage signaling via 2 distinct roles: by mediating the 'Lys-63'-linked ubiquitination of histones H2A and H2AX and promoting the recruitment of DNA repair proteins at double-strand breaks (DSBs) sites, and by catalyzing 'Lys-48'-linked ubiquitination to remove target proteins from DNA damage sites. Following DNA DSBs, it is recruited to the sites of damage by ATM-phosphorylated mdc1 and catalyzes the 'Lys-63'-linked ubiquitination of histones H2A and H2AX, thereby promoting the formation of tp53bp1 and brca1 ionizing radiation-induced foci (IRIF). H2A ubiquitination also mediates the ATM-dependent transcriptional silencing at regions flanking DSBs in cis, a mechanism to avoid collision between transcription and repair intermediates. Also catalyzes the formation of 'Lys-48'-linked polyubiquitin chains, leading to degradation of substrate proteins. In addition to its function in damage signaling, also plays a role in higher-order chromatin structure by mediating extensive chromatin decondensation. This is E3 ubiquitin-protein ligase rnf8-B from Xenopus laevis (African clawed frog).